Consider the following 514-residue polypeptide: MEISWGRAMWRNFLGQSPDWYKLALLVFLIVNPFIFLANPFVAGWLLVAEFIFTLAMALKCYPLLPGGLLAIEAVIIGMTSAAHVREEVAANLEVLLLLMFMVAGIYFMKQLLLFIFTRLLLSIRSKMVLSLAFCVAAAFLSAFLDALTVVAVVISVAVGFYGIYHRVASSRGEENDMLDDSHIDPHYKTVLEQFRGFLRSLMMHAGVGTALGGVMTMVGEPQNLIIAKAAGWHFGDFFLRMSPVTVPVLVCGLLTCMLVEKMRWFGYGETLPEKVRDVLQQFDDQSRKKRTRQDKIKLIVQAVIGVWLVTALALHLAEVGLIGLSVIILATALTGVTDEHAIGKAFTESLPFTALLTVFFSIVAVIIDQHLFAPIIQFVLQASEHAQLTLFYLFNGLLSSISDNVFVGTIYINEAKAAMENGAISLKQFELLAVAINTGTNLPSVATPNGQAAFLFLLTSALAPLIRLSYGRMVWMALPYTIVLTLIGLLCVEFALAPATEWMTQAGWLATLS.

12 helical membrane-spanning segments follow: residues 23–43, 63–83, 97–117, 120–140, 144–164, 202–222, 238–258, 303–323, 357–377, 391–411, 447–467, and 475–495; these read LALL…PFVA, PLLP…TSAA, LLLM…LFIF, LLLS…AAAF, FLDA…FYGI, LMMH…VGEP, FFLR…LTCM, AVIG…VGLI, LTVF…APII, LFYL…VGTI, ATPN…APLI, and VWMA…CVEF.

Belongs to the NhaB Na(+)/H(+) (TC 2.A.34) antiporter family.

It is found in the cell inner membrane. It catalyses the reaction 2 Na(+)(in) + 3 H(+)(out) = 2 Na(+)(out) + 3 H(+)(in). Functionally, na(+)/H(+) antiporter that extrudes sodium in exchange for external protons. The protein is Na(+)/H(+) antiporter NhaB of Salmonella paratyphi A (strain ATCC 9150 / SARB42).